The sequence spans 181 residues: Large ribosomal subunit protein uL5 (181 aa).

Belongs to the universal ribosomal protein uL5 family. As to quaternary structure, part of the 50S ribosomal subunit; part of the 5S rRNA/L5/L18/L25 subcomplex. Contacts the 5S rRNA and the P site tRNA. Forms a bridge to the 30S subunit in the 70S ribosome.

Its function is as follows. This is one of the proteins that bind and probably mediate the attachment of the 5S RNA into the large ribosomal subunit, where it forms part of the central protuberance. In the 70S ribosome it contacts protein S13 of the 30S subunit (bridge B1b), connecting the 2 subunits; this bridge is implicated in subunit movement. Contacts the P site tRNA; the 5S rRNA and some of its associated proteins might help stabilize positioning of ribosome-bound tRNAs. The chain is Large ribosomal subunit protein uL5 from Helicobacter pylori (strain G27).